A 157-amino-acid chain; its full sequence is S-ribosylhomocysteine lyase (157 aa).

The Fe cation site is built by histidine 54, histidine 58, and cysteine 126.

Belongs to the LuxS family. Homodimer. The cofactor is Fe cation.

It catalyses the reaction S-(5-deoxy-D-ribos-5-yl)-L-homocysteine = (S)-4,5-dihydroxypentane-2,3-dione + L-homocysteine. In terms of biological role, involved in the synthesis of autoinducer 2 (AI-2) which is secreted by bacteria and is used to communicate both the cell density and the metabolic potential of the environment. The regulation of gene expression in response to changes in cell density is called quorum sensing. Catalyzes the transformation of S-ribosylhomocysteine (RHC) to homocysteine (HC) and 4,5-dihydroxy-2,3-pentadione (DPD). The chain is S-ribosylhomocysteine lyase from Bacillus cereus (strain G9842).